Here is a 451-residue protein sequence, read N- to C-terminus: METNQILETIRMIEEEKLDIRTITMGISLLDCMDGDGEVARKKIYQKIVTKARNLVAVGEAIESEFGIPIINKRISVTPIAIIAGSSADTDYVGFAKTLDAAAKEVGVNFIGGYSALVQKGYTKGDEILIRSIPQALAQTERVCSSVNVGSTRTGINMDAVRQMGEVIKETADLTADTQGLGCAKLVVFANAVEDNPFMAGAFHGVGEADCVINVGVSGPGVVKRAIEKVKGEPFDIVAETVKQTAFKITRMGQLVGQVASEKLGVPFGIVDLSLAPTPAIGDSVAHILEEMGLEMVGTHGTTAALALLNDAVKKGGVMACGHVGGLSGAFIPVSEDAGMIEAVQQGALNLEKLEAMTAICSVGLDMIAVPGDTTAETLAAMIADEAAIGVINNKTTAVRVIPASGTKVGDMVEFGGLLGTAPVMPVNGKSSVDFIARGGRIPAPIHSFKN.

It belongs to the UPF0210 family. Homodimer.

The sequence is that of UPF0210 protein LMHCC_2097 from Listeria monocytogenes serotype 4a (strain HCC23).